We begin with the raw amino-acid sequence, 284 residues long: Rhomboid-type serine protease 2 (284 aa).

6 consecutive transmembrane segments (helical) span residues 17 to 37 (PPAL…IKSV), 66 to 86 (FHVN…PLAV), 98 to 118 (VTLN…GLIF), 124 to 141 (VIGL…MAYH), 160 to 180 (IKLY…ILFP), and 182 to 202 (SSLP…YGYI). Serine 128 (nucleophile) is an active-site residue. Residue histidine 187 is part of the active site.

The protein belongs to the peptidase S54 family.

It is found in the golgi apparatus membrane. Its subcellular location is the golgi apparatus. The protein localises to the cis-Golgi network membrane. It carries out the reaction Cleaves type-1 transmembrane domains using a catalytic dyad composed of serine and histidine that are contributed by different transmembrane domains.. Its function is as follows. Probable rhomboid-type serine protease that catalyzes intramembrane proteolysis. In Candida albicans (strain SC5314 / ATCC MYA-2876) (Yeast), this protein is Rhomboid-type serine protease 2 (RBD2).